A 648-amino-acid polypeptide reads, in one-letter code: Macrolide export ATP-binding/permease protein MacB (648 aa).

The region spanning 6 to 251 is the ABC transporter domain; it reads IRVRGVSRAF…GPSAGWRGAI (246 aa). 42 to 49 provides a ligand contact to ATP; sequence GASGSGKS. Helical transmembrane passes span 273 to 293, 528 to 548, 572 to 592, and 613 to 633; these read LLTM…SALG, VAVI…LVSV, FLIE…MLAL, and SIIV…FLPA.

Belongs to the ABC transporter superfamily. Macrolide exporter (TC 3.A.1.122) family. As to quaternary structure, homodimer.

It localises to the cell inner membrane. Its function is as follows. Non-canonical ABC transporter that contains transmembrane domains (TMD), which form a pore in the inner membrane, and an ATP-binding domain (NBD), which is responsible for energy generation. Confers resistance against macrolides. The polypeptide is Macrolide export ATP-binding/permease protein MacB (Agrobacterium fabrum (strain C58 / ATCC 33970) (Agrobacterium tumefaciens (strain C58))).